Consider the following 932-residue polypeptide: Transcriptional regulatory protein DagR (932 aa).

Residues 111 to 343 enclose the Sigma-54 factor interaction domain; that stretch reads LIGYDRSLRD…LKSDIQFLCA (233 aa). ATP contacts are provided by residues 141–148 and 210–219; these read GPSGVGKT and ADGGYLLLDE. The 106-residue stretch at 462 to 567 folds into the PRD 1 domain; that stretch reads RYGDQIEERV…KECRHYRQRI (106 aa). Phosphohistidine is present on histidine 497. The region spanning 572-708 is the PTS EIIA type-4 domain; the sequence is DCGVILIAHG…PQQENGGKVL (137 aa). Residue histidine 580 is the Tele-phosphohistidine intermediate of the active site. Residues 835–932 form the PRD 2 domain; sequence LNPQRILKEM…YFYIYELLYS (98 aa). Histidine 870 carries the phosphohistidine modification.

Involved in the regulation of the catabolism of D-glucosaminate. The sequence is that of Transcriptional regulatory protein DagR (dgaR) from Salmonella typhimurium (strain 14028s / SGSC 2262).